The chain runs to 248 residues: MSTLFVSDVHLSEKNPKLTDLFFYFLKNKAILSRSLYILGDLFETWVGDDNITYISKELANITNYLADNGTSCYFIKGNRDFLIGKSYFKSSKITLLPYKKIININKQSIIILHGDTLCLNDKNYQKFKKLVNQDWLQKFFLKLPLCARIKISNLIINKRKKLNLKRMNYLTKINKEYIKKIMEQTNTNIMIHGHIHMPKVHVLPNRKYRIVLGMWNKSGSILEINKKLSLIKFSKLYCSYTSYPLKY.

5 residues coordinate Mn(2+): Asp8, His10, Asp41, Asn79, and His114. A substrate-binding site is contributed by 79 to 80 (NR). Positions 122, 164, 167, and 195 each coordinate substrate. The Mn(2+) site is built by His195 and His197.

The protein belongs to the LpxH family. The cofactor is Mn(2+).

It is found in the cell inner membrane. The catalysed reaction is UDP-2-N,3-O-bis[(3R)-3-hydroxytetradecanoyl]-alpha-D-glucosamine + H2O = 2-N,3-O-bis[(3R)-3-hydroxytetradecanoyl]-alpha-D-glucosaminyl 1-phosphate + UMP + 2 H(+). It functions in the pathway glycolipid biosynthesis; lipid IV(A) biosynthesis; lipid IV(A) from (3R)-3-hydroxytetradecanoyl-[acyl-carrier-protein] and UDP-N-acetyl-alpha-D-glucosamine: step 4/6. In terms of biological role, hydrolyzes the pyrophosphate bond of UDP-2,3-diacylglucosamine to yield 2,3-diacylglucosamine 1-phosphate (lipid X) and UMP by catalyzing the attack of water at the alpha-P atom. Involved in the biosynthesis of lipid A, a phosphorylated glycolipid that anchors the lipopolysaccharide to the outer membrane of the cell. The sequence is that of UDP-2,3-diacylglucosamine hydrolase from Wigglesworthia glossinidia brevipalpis.